A 140-amino-acid chain; its full sequence is Nucleoside diphosphate kinase (140 aa).

Residues Lys11, Phe59, Arg87, Thr93, Arg104, and Asn114 each coordinate ATP. His117 functions as the Pros-phosphohistidine intermediate in the catalytic mechanism.

This sequence belongs to the NDK family. Homotetramer. Requires Mg(2+) as cofactor.

The protein localises to the cytoplasm. The catalysed reaction is a 2'-deoxyribonucleoside 5'-diphosphate + ATP = a 2'-deoxyribonucleoside 5'-triphosphate + ADP. The enzyme catalyses a ribonucleoside 5'-diphosphate + ATP = a ribonucleoside 5'-triphosphate + ADP. Its function is as follows. Major role in the synthesis of nucleoside triphosphates other than ATP. The ATP gamma phosphate is transferred to the NDP beta phosphate via a ping-pong mechanism, using a phosphorylated active-site intermediate. In Rhizorhabdus wittichii (strain DSM 6014 / CCUG 31198 / JCM 15750 / NBRC 105917 / EY 4224 / RW1) (Sphingomonas wittichii), this protein is Nucleoside diphosphate kinase.